A 512-amino-acid chain; its full sequence is ATP synthase subunit alpha (512 aa).

Residue Gly169–Thr176 participates in ATP binding.

This sequence belongs to the ATPase alpha/beta chains family. F-type ATPases have 2 components, CF(1) - the catalytic core - and CF(0) - the membrane proton channel. CF(1) has five subunits: alpha(3), beta(3), gamma(1), delta(1), epsilon(1). CF(0) has four main subunits: a(1), b(1), b'(1) and c(9-12).

The protein localises to the cell inner membrane. It carries out the reaction ATP + H2O + 4 H(+)(in) = ADP + phosphate + 5 H(+)(out). Functionally, produces ATP from ADP in the presence of a proton gradient across the membrane. The alpha chain is a regulatory subunit. This is ATP synthase subunit alpha from Jannaschia sp. (strain CCS1).